Consider the following 873-residue polypeptide: Serine/threonine-protein phosphatase 4 regulatory subunit 4 (873 aa).

3 HEAT repeats span residues 213–251 (ILPL…TKSV), 252–290 (VLPE…RSQT), and 392–427 (NFHM…SKLL). Positions 686 to 720 (QKKFYEKDLLDQEKEREELLLLEMEQLEKEKQQND) form a coiled coil. Residues 713–737 (EKEKQQNDGRPMSDKMFEKKRRDTK) show a composition bias toward basic and acidic residues. Positions 713–766 (EKEKQQNDGRPMSDKMFEKKRRDTKTPTQSLPKNIPISVPGPSSVTPSTSKEIK) are disordered. Residues 747–762 (IPISVPGPSSVTPSTS) show a composition bias toward low complexity. A Phosphoserine modification is found at S775. Residue T797 is modified to Phosphothreonine. The segment covering 822–858 (TRNASSVPSSFSPNTPLPSTSRGTGNSVDPKSSGSKD) has biased composition (polar residues). The tract at residues 822-873 (TRNASSVPSSFSPNTPLPSTSRGTGNSVDPKSSGSKDTQPRKATLKSRKSNP) is disordered. A compositionally biased stretch (basic residues) spans 864-873 (ATLKSRKSNP).

In terms of assembly, serine/threonine-protein phosphatase 4 (PP4) occurs in different assemblies of the catalytic and one or more regulatory subunits. Component of the PP4 complex PPP4C-PPP4R4.

The protein resides in the cytoplasm. Its function is as follows. Putative regulatory subunit of serine/threonine-protein phosphatase 4. The polypeptide is Serine/threonine-protein phosphatase 4 regulatory subunit 4 (PPP4R4) (Homo sapiens (Human)).